The following is a 518-amino-acid chain: Gypsy retrotransposon integrase-like protein 1 (518 aa).

The Integrase catalytic domain maps to 135–293 (VVGNPWSVVT…PYFQMFNRNP (159 aa)). Residues 326 to 348 (NQTPAAGQMESSTSEELSKSKVA) are disordered. A Phosphoserine modification is found at Ser498.

The sequence is that of Gypsy retrotransposon integrase-like protein 1 (GIN1) from Rattus norvegicus (Rat).